A 497-amino-acid polypeptide reads, in one-letter code: Vacuolar-processing enzyme (497 aa).

Positions 1 to 31 (METHKSLLFFTNYVLFLVFTLSFLPIPGLLA) are cleaved as a signal peptide. H180 is a catalytic residue. C222 (nucleophile) is an active-site residue. Cysteines 255 and 269 form a disulfide. 2 N-linked (GlcNAc...) asparagine glycosylation sites follow: N320 and N374. Cystine bridges form between C433-C463 and C445-C480.

It belongs to the peptidase C13 family.

Functionally, asparagine-specific endopeptidase involved in the processing of vacuolar seed protein precursors into the mature forms. The polypeptide is Vacuolar-processing enzyme (Ricinus communis (Castor bean)).